A 104-amino-acid chain; its full sequence is Pyrimidine/purine nucleoside phosphorylase (104 aa).

It belongs to the nucleoside phosphorylase PpnP family.

The enzyme catalyses a purine D-ribonucleoside + phosphate = a purine nucleobase + alpha-D-ribose 1-phosphate. The catalysed reaction is adenosine + phosphate = alpha-D-ribose 1-phosphate + adenine. It carries out the reaction cytidine + phosphate = cytosine + alpha-D-ribose 1-phosphate. It catalyses the reaction guanosine + phosphate = alpha-D-ribose 1-phosphate + guanine. The enzyme catalyses inosine + phosphate = alpha-D-ribose 1-phosphate + hypoxanthine. The catalysed reaction is thymidine + phosphate = 2-deoxy-alpha-D-ribose 1-phosphate + thymine. It carries out the reaction uridine + phosphate = alpha-D-ribose 1-phosphate + uracil. It catalyses the reaction xanthosine + phosphate = alpha-D-ribose 1-phosphate + xanthine. Functionally, catalyzes the phosphorolysis of diverse nucleosides, yielding D-ribose 1-phosphate and the respective free bases. Can use uridine, adenosine, guanosine, cytidine, thymidine, inosine and xanthosine as substrates. Also catalyzes the reverse reactions. The polypeptide is Pyrimidine/purine nucleoside phosphorylase (Geobacter metallireducens (strain ATCC 53774 / DSM 7210 / GS-15)).